We begin with the raw amino-acid sequence, 273 residues long: ATP synthase subunit a (273 aa).

The next 7 helical transmembrane spans lie at 34 to 54 (IINMDTIFWSIFAGVVGCLFM), 94 to 114 (FIAPLALTVFVWVALMNSLDF), 115 to 135 (LPVDMFSAFFHAVGLDSLITH), 143 to 163 (DLNGTMGIALGVFALMIFYNI), 171 to 191 (FVHELFAAPFGIWLAPFNLLL), 218 to 238 (FLLIALLGSTATAFGFFGHVV), and 244 to 264 (AIFHILIVFLQAFIFMMLTLV).

The protein belongs to the ATPase A chain family. As to quaternary structure, F-type ATPases have 2 components, CF(1) - the catalytic core - and CF(0) - the membrane proton channel. CF(1) has five subunits: alpha(3), beta(3), gamma(1), delta(1), epsilon(1). CF(0) has three main subunits: a(1), b(2) and c(9-12). The alpha and beta chains form an alternating ring which encloses part of the gamma chain. CF(1) is attached to CF(0) by a central stalk formed by the gamma and epsilon chains, while a peripheral stalk is formed by the delta and b chains.

The protein resides in the cell inner membrane. Key component of the proton channel; it plays a direct role in the translocation of protons across the membrane. This is ATP synthase subunit a from Janthinobacterium sp. (strain Marseille) (Minibacterium massiliensis).